The sequence spans 669 residues: DNA ligase (669 aa).

NAD(+) contacts are provided by residues 33–37 (DAEYD), 82–83 (SL), and glutamate 114. Lysine 116 acts as the N6-AMP-lysine intermediate in catalysis. Arginine 137, glutamate 174, lysine 291, and lysine 315 together coordinate NAD(+). Positions 409, 412, 427, and 433 each coordinate Zn(2+). One can recognise a BRCT domain in the interval 593–669 (EIPQPLAGKV…QTEQDLLALL (77 aa)).

This sequence belongs to the NAD-dependent DNA ligase family. LigA subfamily. Requires Mg(2+) as cofactor. Mn(2+) is required as a cofactor.

It carries out the reaction NAD(+) + (deoxyribonucleotide)n-3'-hydroxyl + 5'-phospho-(deoxyribonucleotide)m = (deoxyribonucleotide)n+m + AMP + beta-nicotinamide D-nucleotide.. DNA ligase that catalyzes the formation of phosphodiester linkages between 5'-phosphoryl and 3'-hydroxyl groups in double-stranded DNA using NAD as a coenzyme and as the energy source for the reaction. It is essential for DNA replication and repair of damaged DNA. This chain is DNA ligase, found in Vibrio vulnificus (strain YJ016).